Reading from the N-terminus, the 299-residue chain is N-acetylaspartate synthetase (299 aa).

The span at alanine 44–glycine 57 shows a compositional bias: pro residues. The segment at alanine 44–proline 70 is disordered. Residues proline 60 to proline 70 show a composition bias toward gly residues. The chain crosses the membrane as a helical span at residues tyrosine 118 to valine 138. The N-acetyltransferase domain maps to leucine 143–alanine 280.

Belongs to the NAT8 family. In terms of tissue distribution, expressed in brain, including in mesencephalic dopaminergic neurons of the substantia nigra and ventral tegmental area and oligodendrocytes. Expressed in cortical pyramidal neurons and granule cells of the hippocampus (at protein level).

It is found in the cytoplasm. The protein resides in the microsome membrane. The protein localises to the mitochondrion membrane. It localises to the endoplasmic reticulum membrane. It carries out the reaction L-aspartate + acetyl-CoA = N-acetyl-L-aspartate + CoA + H(+). Aminooxyacetic acid (AOAA) blocks its activity in both cytoplasm and mitochondria. Functionally, catalyzes the synthesis of N-acetylaspartate acid (NAA) from L-aspartate and acetyl-CoA. Promotes dopamine uptake by regulating TNF-alpha expression. Attenuates methamphetamine-induced inhibition of dopamine uptake. This is N-acetylaspartate synthetase (Nat8l) from Rattus norvegicus (Rat).